The sequence spans 97 residues: Co-chaperonin GroES (97 aa).

Belongs to the GroES chaperonin family. In terms of assembly, heptamer of 7 subunits arranged in a ring. Interacts with the chaperonin GroEL.

Its subcellular location is the cytoplasm. Its function is as follows. Together with the chaperonin GroEL, plays an essential role in assisting protein folding. The GroEL-GroES system forms a nano-cage that allows encapsulation of the non-native substrate proteins and provides a physical environment optimized to promote and accelerate protein folding. GroES binds to the apical surface of the GroEL ring, thereby capping the opening of the GroEL channel. This is Co-chaperonin GroES from Burkholderia cepacia (Pseudomonas cepacia).